The sequence spans 173 residues: Nascent polypeptide-associated complex subunit alpha (173 aa).

In terms of domain architecture, NAC-A/B spans 21-85 (VVHAEKAQKL…VTVEDMAAQA (65 aa)). Residues 89-117 (NESQKQATETKEEAAITEESGDAQPADTA) form a disordered region. The residue at position 122 (serine 122) is a Phosphoserine. The 38-residue stretch at 134–171 (VDAKDIELVMAQANVSRAKAVTALKENNSDVVNAIMSL) folds into the UBA domain.

The protein belongs to the NAC-alpha family. In terms of assembly, part of the nascent polypeptide-associated complex (NAC), consisting of ucp15 and btf3. NAC associates with ribosomes via btf3.

It is found in the cytoplasm. Its subcellular location is the nucleus. Component of the nascent polypeptide-associated complex (NAC), a dynamic component of the ribosomal exit tunnel, protecting the emerging polypeptides from interaction with other cytoplasmic proteins to ensure appropriate nascent protein targeting. The NAC complex also promotes mitochondrial protein import by enhancing productive ribosome interactions with the outer mitochondrial membrane and blocks the inappropriate interaction of ribosomes translating non-secretory nascent polypeptides with translocation sites in the membrane of the endoplasmic reticulum. Ucp15 may also be involved in transcription regulation. The chain is Nascent polypeptide-associated complex subunit alpha (egd2) from Schizosaccharomyces pombe (strain 972 / ATCC 24843) (Fission yeast).